The chain runs to 170 residues: Protein SprT (170 aa).

Positions 19 to 163 constitute a SprT-like domain; the sequence is REKLQQANLR…RCLHCGTSLR (145 aa). Position 78 (histidine 78) interacts with Zn(2+). Residue glutamate 79 is part of the active site. Histidine 82 contributes to the Zn(2+) binding site.

It belongs to the SprT family. It depends on Zn(2+) as a cofactor.

Its subcellular location is the cytoplasm. This Erwinia tasmaniensis (strain DSM 17950 / CFBP 7177 / CIP 109463 / NCPPB 4357 / Et1/99) protein is Protein SprT.